Here is a 93-residue protein sequence, read N- to C-terminus: Sec-independent protein translocase protein TatA (93 aa).

A helical transmembrane segment spans residues 1–21; sequence MGSLSPWHWAILAVVVILLFG. Residues 45 to 93 are disordered; sequence EMQSENKTETSALGAQSESSAANPTPVQSQRVDPPAPSEQGHSEARPAS. Positions 53–75 are enriched in polar residues; it reads ETSALGAQSESSAANPTPVQSQR.

The protein belongs to the TatA/E family. As to quaternary structure, the Tat system comprises two distinct complexes: a TatABC complex, containing multiple copies of TatA, TatB and TatC subunits, and a separate TatA complex, containing only TatA subunits. Substrates initially bind to the TatABC complex, which probably triggers association of the separate TatA complex to form the active translocon.

The protein localises to the cell membrane. Functionally, part of the twin-arginine translocation (Tat) system that transports large folded proteins containing a characteristic twin-arginine motif in their signal peptide across membranes. TatA could form the protein-conducting channel of the Tat system. In Mycolicibacterium paratuberculosis (strain ATCC BAA-968 / K-10) (Mycobacterium paratuberculosis), this protein is Sec-independent protein translocase protein TatA.